Consider the following 224-residue polypeptide: MINPVTNTQGVSPINTKYAEHVVKNIYPEIKHDYFNESPNIYDKKYISGITRGVAELKQEEFVNEKARRFSYMKTMYSVCPEAFEPISRNEASTPEGSWLTVISGKRPMGQFSVDSLYNPDLHALCELPDICCKIFPKENNDFLYIVVVYRNDSPLGEQRANRFIELYNIKRDIMQELNYELPELKAVKSEMIIAREMGEIFSYMPGEIDSYMKYINNKLSKIE.

Residues 49–52 (GITR) are interaction with host proteins TAB2, TAB3 and ZRANB3. S-adenosyl-L-methionine contacts are provided by alanine 92, serine 98, arginine 107, glutamine 111, tyrosine 204, and glutamate 208.

It belongs to the NleE/OspZ family. As to quaternary structure, monomer.

The protein resides in the secreted. Its subcellular location is the host nucleus. It catalyses the reaction L-cysteinyl-[protein] + S-adenosyl-L-methionine = S-methyl-L-cysteinyl-[protein] + S-adenosyl-L-homocysteine + H(+). Functionally, cysteine methyltransferase effector that inhibits host cell NF-kappa-B activation by preventing nuclear translocation of host protein RELA/p65. Acts by mediating cysteine methylation of host proteins TAB2 and TAB3: methylation of a conserved cysteine residue of the RanBP2-type zinc finger (NZF) of TAB2 and TAB3 disrupts zinc-binding, thereby inactivating the ubiquitin chain-binding activity of TAB2 and TAB3, leading to NF-kappa-B inactivation. Also mediates cysteine methylation of host protein ZRANB3, inactivating its ability to bind ubiquitin chains. In Escherichia coli O157:H7, this protein is Cysteine S-methyltransferase NleE.